The chain runs to 103 residues: Large ribosomal subunit protein bL21 (103 aa).

It belongs to the bacterial ribosomal protein bL21 family. Part of the 50S ribosomal subunit. Contacts protein L20.

Its function is as follows. This protein binds to 23S rRNA in the presence of protein L20. The polypeptide is Large ribosomal subunit protein bL21 (Aeromonas salmonicida (strain A449)).